The sequence spans 124 residues: Small ribosomal subunit protein uS12 (124 aa).

Aspartate 89 is modified (3-methylthioaspartic acid).

The protein belongs to the universal ribosomal protein uS12 family. Part of the 30S ribosomal subunit. Contacts proteins S8 and S17. May interact with IF1 in the 30S initiation complex.

With S4 and S5 plays an important role in translational accuracy. Functionally, interacts with and stabilizes bases of the 16S rRNA that are involved in tRNA selection in the A site and with the mRNA backbone. Located at the interface of the 30S and 50S subunits, it traverses the body of the 30S subunit contacting proteins on the other side and probably holding the rRNA structure together. The combined cluster of proteins S8, S12 and S17 appears to hold together the shoulder and platform of the 30S subunit. The chain is Small ribosomal subunit protein uS12 from Shewanella sp. (strain ANA-3).